The following is a 736-amino-acid chain: Polyribonucleotide nucleotidyltransferase (736 aa).

Positions 518 and 524 each coordinate Mg(2+). A KH domain is found at 584–644 (PSLQIFSINP…QKVEAAKEHI (61 aa)). In terms of domain architecture, S1 motif spans 665–732 (GEVFKGKVKK…NKNKVELGRA (68 aa)).

It belongs to the polyribonucleotide nucleotidyltransferase family. Mg(2+) is required as a cofactor.

It localises to the cytoplasm. The enzyme catalyses RNA(n+1) + phosphate = RNA(n) + a ribonucleoside 5'-diphosphate. In terms of biological role, involved in mRNA degradation. Catalyzes the phosphorolysis of single-stranded polyribonucleotides processively in the 3'- to 5'-direction. The sequence is that of Polyribonucleotide nucleotidyltransferase from Wolinella succinogenes (strain ATCC 29543 / DSM 1740 / CCUG 13145 / JCM 31913 / LMG 7466 / NCTC 11488 / FDC 602W) (Vibrio succinogenes).